The following is a 529-amino-acid chain: Bifunctional purine biosynthesis protein PurH (529 aa).

An MGS-like domain is found at 1–148; sequence MQQRRPVRRA…KNHKDVAIVV (148 aa).

The protein belongs to the PurH family.

It catalyses the reaction (6R)-10-formyltetrahydrofolate + 5-amino-1-(5-phospho-beta-D-ribosyl)imidazole-4-carboxamide = 5-formamido-1-(5-phospho-D-ribosyl)imidazole-4-carboxamide + (6S)-5,6,7,8-tetrahydrofolate. The enzyme catalyses IMP + H2O = 5-formamido-1-(5-phospho-D-ribosyl)imidazole-4-carboxamide. It functions in the pathway purine metabolism; IMP biosynthesis via de novo pathway; 5-formamido-1-(5-phospho-D-ribosyl)imidazole-4-carboxamide from 5-amino-1-(5-phospho-D-ribosyl)imidazole-4-carboxamide (10-formyl THF route): step 1/1. The protein operates within purine metabolism; IMP biosynthesis via de novo pathway; IMP from 5-formamido-1-(5-phospho-D-ribosyl)imidazole-4-carboxamide: step 1/1. This is Bifunctional purine biosynthesis protein PurH from Salmonella typhi.